Consider the following 984-residue polypeptide: MSQTPSSLCDLEHHSAFVERHIGPNDAEIAQMLEVVGHASLDALTDAIVPGNIKSPAPLALPEAITEEEALVKIRAIADKNTVYRNFIGQGYYGTHTPKVILRNILENPAWYTAYTPYQAEISQGRMEALINFQTLCADLTGMQIANASLLDEATAAAEAMTLAKRSAKSRSDIFFVHDAVHPQTLELLRTRAEPLDIMLRVGTPEEALQAECFGVLLQYPDSFGHIGDHAALADAVHAQGGLVAVATDLLALTLIAAPGQWGADIVVGNSQRFGVPFGFGGPHAAFMACRDAYKRSMPGRLIGVSIDAAGNPAYRLTLQTREQHIRREKATSNICTAQVLLAVMASMYAVYHGPDGLTRIARRTHRLAAILAAALRGAGVTVGEHFFDTLHVKAIDADAIHARARAAGINLRAIDSEAVGISLDETTTRADVVALAQLFGAMADVDALDAATADALPQGLLRSSAFLTHPVFNTHHSEHELLRYMRSLADKDLAMDRTMIPLGSCTMKLNATAEMIPVTWPEFGAIHPLAPAEQSAGYAQLIDELEAMLVECTGYDAVSLQPNSGAQGEYAGLLAIRAYHRSRGEAHRDICLIPESAHGTNPASAQMCGMTVVVTKCDANGNVDVDDIRAKAEKYSDRLAALMITYPSTHGVFEEDVVAICEAVHAHGGQVYTDGANMNALVGVAKPGKWGSDVSHLNLHKTFCIPHGGGGPGVGPCAVKSHLAPFLPRAGLHAGEGQTAAIHGGGFNSGSGSGHSSRIGGMVSAAAYGSASILPISWMYVTMMGSAGLRKATQVALLNANYIAKRLAPHYKTLYTGRNGLVAHECILDVRPLEKTSGIGAEDIAKRLIDFGFHAPTLSFPVAGTLMVEPTESESQHELDRFIDAMIQIREEIRAIEDGRLDREDNPLKHAPHTATQVSASEWTHAYPRELAAFPLPSLKQQKYWPPVARVDNVYGDKNVMCACIPVDAYKIPVDAYKEDAEA.

Position 702 is an N6-(pyridoxal phosphate)lysine (Lys702).

The protein belongs to the GcvP family. The glycine cleavage system is composed of four proteins: P, T, L and H. Pyridoxal 5'-phosphate serves as cofactor.

The enzyme catalyses N(6)-[(R)-lipoyl]-L-lysyl-[glycine-cleavage complex H protein] + glycine + H(+) = N(6)-[(R)-S(8)-aminomethyldihydrolipoyl]-L-lysyl-[glycine-cleavage complex H protein] + CO2. Functionally, the glycine cleavage system catalyzes the degradation of glycine. The P protein binds the alpha-amino group of glycine through its pyridoxal phosphate cofactor; CO(2) is released and the remaining methylamine moiety is then transferred to the lipoamide cofactor of the H protein. This is Glycine dehydrogenase (decarboxylating) from Xanthomonas oryzae pv. oryzae (strain MAFF 311018).